Here is a 209-residue protein sequence, read N- to C-terminus: Orotate phosphoribosyltransferase (209 aa).

Residues R96, K100, H102, and 122–130 each bind 5-phospho-alpha-D-ribose 1-diphosphate; that span reads EDLISTGGS. S126 contacts orotate.

The protein belongs to the purine/pyrimidine phosphoribosyltransferase family. PyrE subfamily. Homodimer. It depends on Mg(2+) as a cofactor.

The catalysed reaction is orotidine 5'-phosphate + diphosphate = orotate + 5-phospho-alpha-D-ribose 1-diphosphate. It participates in pyrimidine metabolism; UMP biosynthesis via de novo pathway; UMP from orotate: step 1/2. Catalyzes the transfer of a ribosyl phosphate group from 5-phosphoribose 1-diphosphate to orotate, leading to the formation of orotidine monophosphate (OMP). In Streptococcus pyogenes serotype M5 (strain Manfredo), this protein is Orotate phosphoribosyltransferase.